A 408-amino-acid polypeptide reads, in one-letter code: 3-ketoacyl-CoA thiolase B, peroxisomal (408 aa).

Catalysis depends on C112, which acts as the Acyl-thioester intermediate. Active-site proton acceptor residues include H366 and C394.

This sequence belongs to the thiolase-like superfamily. Thiolase family. As to quaternary structure, homodimer.

Its subcellular location is the peroxisome. The enzyme catalyses an acyl-CoA + acetyl-CoA = a 3-oxoacyl-CoA + CoA. It functions in the pathway lipid metabolism; fatty acid metabolism. In Candida tropicalis (Yeast), this protein is 3-ketoacyl-CoA thiolase B, peroxisomal.